Reading from the N-terminus, the 87-residue chain is uncharacterized protein (87 aa).

The signal sequence occupies residues 1-22 (MKIKTTVAALSVLSVLSFGAFA).

This sequence belongs to the BhsA/McbA family.

Its subcellular location is the periplasm. This is an uncharacterized protein from Escherichia coli O6:H1 (strain CFT073 / ATCC 700928 / UPEC).